We begin with the raw amino-acid sequence, 246 residues long: 14-3-3 protein eta (246 aa).

The residue at position 2 (glycine 2) is an N-acetylglycine. Serine 25 and serine 59 each carry phosphoserine.

The protein belongs to the 14-3-3 family. Homodimer. Interacts with many nuclear hormone receptors and cofactors including AR, ESR1, ESR2, MC2R, NR3C1, NRIP1, PPARBP and THRA. Interacts with ABL1 (phosphorylated form); the interaction retains it in the cytoplasm. Interacts with ARHGEF28 and CDK16. Weakly interacts with CDKN1B. Interacts with GAB2. Interacts with KCNK18 in a phosphorylation-dependent manner. Interacts with SAMSN1. Interacts with the 'Ser-241' phosphorylated form of PDPK1. Interacts with the 'Thr-369' phosphorylated form of DAPK2. Interacts with PI4KB, TBC1D22A and TBC1D22B. Interacts with SLITRK1. Interacts with MEFV. Post-translationally, phosphorylated on Ser-59 by protein kinase C delta type catalytic subunit in a sphingosine-dependent fashion. As to expression, expressed mainly in the brain and present in other tissues albeit at lower levels.

Functionally, adapter protein implicated in the regulation of a large spectrum of both general and specialized signaling pathways. Binds to a large number of partners, usually by recognition of a phosphoserine or phosphothreonine motif. Binding generally results in the modulation of the activity of the binding partner. Negatively regulates the kinase activity of PDPK1. The sequence is that of 14-3-3 protein eta (YWHAH) from Homo sapiens (Human).